The chain runs to 159 residues: Large ribosomal subunit protein uL10 (159 aa).

Belongs to the universal ribosomal protein uL10 family. As to quaternary structure, part of the ribosomal stalk of the 50S ribosomal subunit. The N-terminus interacts with L11 and the large rRNA to form the base of the stalk. The C-terminus forms an elongated spine to which L12 dimers bind in a sequential fashion forming a multimeric L10(L12)X complex.

In terms of biological role, forms part of the ribosomal stalk, playing a central role in the interaction of the ribosome with GTP-bound translation factors. The protein is Large ribosomal subunit protein uL10 of Nautilia profundicola (strain ATCC BAA-1463 / DSM 18972 / AmH).